Here is a 429-residue protein sequence, read N- to C-terminus: Probable M18 family aminopeptidase 2 (429 aa).

Zn(2+) contacts are provided by histidine 82, histidine 156, and histidine 401.

Belongs to the peptidase M18 family. It depends on Zn(2+) as a cofactor.

This chain is Probable M18 family aminopeptidase 2, found in Pseudomonas fluorescens (strain SBW25).